We begin with the raw amino-acid sequence, 587 residues long: Laccase abr2 (587 aa).

An N-terminal signal peptide occupies residues 1-17 (MWYQSASLLGVAAVAQA). Plastocyanin-like domains follow at residues 41–137 (IFVN…VHIR) and 168–350 (LVML…ANDG). N-linked (GlcNAc...) asparagine glycosylation is present at asparagine 71. Cu cation contacts are provided by histidine 75, histidine 77, histidine 119, and histidine 121. Asparagine 228, asparagine 383, asparagine 420, and asparagine 462 each carry an N-linked (GlcNAc...) asparagine glycan. Residues 397–577 (PPYPAISPAS…ILMDGVDVWP (181 aa)) form the Plastocyanin-like 3 domain. Histidine 487 is a Cu cation binding site. An N-linked (GlcNAc...) asparagine glycan is attached at asparagine 504.

It belongs to the multicopper oxidase family.

Its subcellular location is the cell surface. It functions in the pathway pigment biosynthesis; melanin biosynthesis. In terms of biological role, laccase; part of the gene cluster that mediates the biosynthesis of dihydroxynaphthalene (DHN)-melanin, a bluish-green pigment and a structural component of the conidial wall. The first step of the pathway is the production of the heptaketide naphtopyrone YWA1 by the polyketide synthase alb1 though condensation of acetyl-CoA with malonyl-CoA. The naphtopyrone YWA1 is then converted to the pentaketide 1,3,6,8-tetrahydroxynaphthalene (1,3,6,8-THN) by the heptaketide hydrolyase ayg1 though chain-length shortening. 1,3,6,8-THN is substrate of the hydroxynaphthalene reductase arp2 to yield scytalone. The scytalone dehydratase arp1 then reduces scytalone to 1,3,8-THN. 1,3,8-THN is also substrate of the hydroxynaphthalene reductase arp2 to yield vermelone. Vermelone is further converted by the multicopper oxidase abr1 to 1,8-DHN. Finally the laccase abr2 transforms 1,8-DHN to DHN-melanin. DHN-melanin biosynthesis appears to be initiated in endosomes where early enzymes (abl1, ayg1, arp1 and arp2) localize, with exocytosis leading to melanin deposition on the cell surface where late enzymes (abr1 and abr2) localize. DHN-melanin is an important structural component of the outer cell wall and is required for the presence of conidial surface hydrophobins. DHN-melanin also plays a crucial role in fungal virulence, including a protective role against the host's immune defenses. DHN-melanin also protects conidia against amoeba predation. The protein is Laccase abr2 of Aspergillus fumigatus (strain ATCC MYA-4609 / CBS 101355 / FGSC A1100 / Af293) (Neosartorya fumigata).